Here is a 363-residue protein sequence, read N- to C-terminus: MIGWGDVYKVVAATVPLYFALFLGYGSVRWWRIFTREQCDAVNRLVAFFALPFFTFEFTLHTDPFQVNYRAVAADVISKAVIVAVIGAWARFMSKGGCAVSWSITSFSLSTLTNSLVVGVPMARAMYGEWAQQLVVQLSVFQAIVWLTLLLFVLEVRKAAIGMYVDGAEAAAAAGKDVEAAGAAAAAGTVVVAAAAGKPSLWALVKVVAHKLARNPNTYASFVGITWACLANRLHIALPSAFEGSVLIMSKSGTGMAMFSMGLFMAQQEKIIACGTSFAALGLVLKFALGPAAMAIGSIAVGLRGDVLRVAIIQAALPQSITSFIFAKEYGLHADVLSTAVIFGMLVSLPLLVGFYIVLELIR.

Transmembrane regions (helical) follow at residues 7–27 (VYKV…GYGS), 39–59 (CDAV…FEFT), 72–92 (VAAD…WARF), 103–123 (SITS…VPMA), 134–154 (LVVQ…LFVL), 222–242 (FVGI…PSAF), 246–266 (VLIM…LFMA), 281–301 (LGLV…SIAV), 307–327 (VLRV…FIFA), and 342–362 (IFGM…LELI).

Belongs to the auxin efflux carrier (TC 2.A.69.1) family. Expressed in leaves, shoot apex and panicles. Expressed in roots, stem bases, stems, leaves and young panicles.

It localises to the membrane. In terms of biological role, may act as a component of the auxin efflux carrier. This chain is Probable auxin efflux carrier component 5a, found in Oryza sativa subsp. japonica (Rice).